The sequence spans 234 residues: Ubiquitin thioesterase OTUB2 (234 aa).

One can recognise an OTU domain in the interval 40 to 231 (TSIRKTKGDG…TSHYNILYAA (192 aa)). The active site involves aspartate 48. Cysteine 51 serves as the catalytic Nucleophile. Residues histidine 205 and histidine 224 contribute to the active site.

It belongs to the peptidase C65 family.

It carries out the reaction Thiol-dependent hydrolysis of ester, thioester, amide, peptide and isopeptide bonds formed by the C-terminal Gly of ubiquitin (a 76-residue protein attached to proteins as an intracellular targeting signal).. Hydrolase that can remove conjugated ubiquitin from proteins in vitro and may therefore play an important regulatory role at the level of protein turnover by preventing degradation. Mediates deubiquitination of 'Lys-11'-,'Lys-48'- and 'Lys-63'-linked polyubiquitin chains, with a preference for 'Lys-63'-linked polyubiquitin chains. The chain is Ubiquitin thioesterase OTUB2 (Otub2) from Mus musculus (Mouse).